A 252-amino-acid polypeptide reads, in one-letter code: 3-dehydroquinate dehydratase (252 aa).

Residues S21, 46-48 (EWR), and R82 each bind 3-dehydroquinate. H143 (proton donor/acceptor) is an active-site residue. Catalysis depends on K170, which acts as the Schiff-base intermediate with substrate. The 3-dehydroquinate site is built by R213, S232, and Q236.

This sequence belongs to the type-I 3-dehydroquinase family. Homodimer.

It carries out the reaction 3-dehydroquinate = 3-dehydroshikimate + H2O. It functions in the pathway metabolic intermediate biosynthesis; chorismate biosynthesis; chorismate from D-erythrose 4-phosphate and phosphoenolpyruvate: step 3/7. Its function is as follows. Involved in the third step of the chorismate pathway, which leads to the biosynthesis of aromatic amino acids. Catalyzes the cis-dehydration of 3-dehydroquinate (DHQ) and introduces the first double bond of the aromatic ring to yield 3-dehydroshikimate. The protein is 3-dehydroquinate dehydratase of Shigella flexneri serotype 5b (strain 8401).